Here is a 277-residue protein sequence, read N- to C-terminus: Elongation factor 1-delta (277 aa).

At Ala-2 the chain carries N-acetylalanine. Lys-17 is modified (N6-acetyllysine). Phosphoserine is present on residues Ser-37, Ser-44, Ser-60, Ser-86, and Ser-106. Lys-107 carries the post-translational modification N6-acetyllysine. Residues Ser-113–Ala-171 are disordered. Lys-117 carries the post-translational modification N6-acetyllysine; alternate. Residue Lys-117 is modified to N6-succinyllysine; alternate. Phosphoserine is present on Ser-119. Thr-129 is modified (phosphothreonine). Ser-133 carries the phosphoserine modification. Thr-147 bears the Phosphothreonine mark. Over residues Thr-149–Lys-168 the composition is skewed to acidic residues. Ser-162 carries the phosphoserine; by CK2 modification.

This sequence belongs to the EF-1-beta/EF-1-delta family. In terms of assembly, EF-1 is composed of 4 subunits: alpha, beta, delta, and gamma.

Functionally, EF-1-beta and EF-1-delta stimulate the exchange of GDP bound to EF-1-alpha to GTP. The sequence is that of Elongation factor 1-delta (EEF1D) from Ovis aries (Sheep).